A 184-amino-acid polypeptide reads, in one-letter code: Protein GrpE (184 aa).

Residues Met-1–Gly-32 are disordered. Low complexity predominate over residues Thr-12–Gly-32.

This sequence belongs to the GrpE family. Homodimer.

The protein localises to the cytoplasm. In terms of biological role, participates actively in the response to hyperosmotic and heat shock by preventing the aggregation of stress-denatured proteins, in association with DnaK and GrpE. It is the nucleotide exchange factor for DnaK and may function as a thermosensor. Unfolded proteins bind initially to DnaJ; upon interaction with the DnaJ-bound protein, DnaK hydrolyzes its bound ATP, resulting in the formation of a stable complex. GrpE releases ADP from DnaK; ATP binding to DnaK triggers the release of the substrate protein, thus completing the reaction cycle. Several rounds of ATP-dependent interactions between DnaJ, DnaK and GrpE are required for fully efficient folding. The chain is Protein GrpE from Cupriavidus pinatubonensis (strain JMP 134 / LMG 1197) (Cupriavidus necator (strain JMP 134)).